Here is a 191-residue protein sequence, read N- to C-terminus: Protein RER1 homolog (191 aa).

Helical transmembrane passes span 35–55, 57–77, and 135–155; these read AFRW…IILL, GFYI…LLFL, and FFDV…LTFL.

This sequence belongs to the RER1 family.

The protein localises to the membrane. Its function is as follows. May be involved in protein transport along the secretory pathway. This Caenorhabditis elegans protein is Protein RER1 homolog (rer-1).